The sequence spans 100 residues: Large ribosomal subunit protein bL28 (100 aa).

It belongs to the bacterial ribosomal protein bL28 family.

The protein is Large ribosomal subunit protein bL28 of Ehrlichia ruminantium (strain Welgevonden).